Here is an 809-residue protein sequence, read N- to C-terminus: Leucine--tRNA ligase (809 aa).

The short motif at 40–50 (PYPSGRIHMGH) is the 'HIGH' region element. Residues 579–583 (KMSKS) carry the 'KMSKS' region motif. Lys582 contributes to the ATP binding site.

Belongs to the class-I aminoacyl-tRNA synthetase family.

Its subcellular location is the cytoplasm. The catalysed reaction is tRNA(Leu) + L-leucine + ATP = L-leucyl-tRNA(Leu) + AMP + diphosphate. This Campylobacter jejuni subsp. jejuni serotype O:23/36 (strain 81-176) protein is Leucine--tRNA ligase.